Consider the following 358-residue polypeptide: Uroporphyrinogen decarboxylase (358 aa).

Substrate contacts are provided by residues 36–40 (RQAGR), Asp-85, Tyr-160, Ser-215, and His-338.

The protein belongs to the uroporphyrinogen decarboxylase family. As to quaternary structure, homodimer.

The protein localises to the cytoplasm. It carries out the reaction uroporphyrinogen III + 4 H(+) = coproporphyrinogen III + 4 CO2. The protein operates within porphyrin-containing compound metabolism; protoporphyrin-IX biosynthesis; coproporphyrinogen-III from 5-aminolevulinate: step 4/4. Catalyzes the decarboxylation of four acetate groups of uroporphyrinogen-III to yield coproporphyrinogen-III. The polypeptide is Uroporphyrinogen decarboxylase (Corynebacterium glutamicum (strain ATCC 13032 / DSM 20300 / JCM 1318 / BCRC 11384 / CCUG 27702 / LMG 3730 / NBRC 12168 / NCIMB 10025 / NRRL B-2784 / 534)).